A 240-amino-acid polypeptide reads, in one-letter code: UDP-2,3-diacylglucosamine hydrolase (240 aa).

5 residues coordinate Mn(2+): aspartate 8, histidine 10, aspartate 41, asparagine 79, and histidine 114. Substrate is bound at residue 79–80 (NR). Substrate-binding residues include aspartate 122, serine 160, asparagine 164, lysine 167, and histidine 195. Mn(2+)-binding residues include histidine 195 and histidine 197.

Belongs to the LpxH family. Mn(2+) is required as a cofactor.

The protein localises to the cell inner membrane. The catalysed reaction is UDP-2-N,3-O-bis[(3R)-3-hydroxytetradecanoyl]-alpha-D-glucosamine + H2O = 2-N,3-O-bis[(3R)-3-hydroxytetradecanoyl]-alpha-D-glucosaminyl 1-phosphate + UMP + 2 H(+). The protein operates within glycolipid biosynthesis; lipid IV(A) biosynthesis; lipid IV(A) from (3R)-3-hydroxytetradecanoyl-[acyl-carrier-protein] and UDP-N-acetyl-alpha-D-glucosamine: step 4/6. Its function is as follows. Hydrolyzes the pyrophosphate bond of UDP-2,3-diacylglucosamine to yield 2,3-diacylglucosamine 1-phosphate (lipid X) and UMP by catalyzing the attack of water at the alpha-P atom. Involved in the biosynthesis of lipid A, a phosphorylated glycolipid that anchors the lipopolysaccharide to the outer membrane of the cell. The polypeptide is UDP-2,3-diacylglucosamine hydrolase (Escherichia fergusonii (strain ATCC 35469 / DSM 13698 / CCUG 18766 / IAM 14443 / JCM 21226 / LMG 7866 / NBRC 102419 / NCTC 12128 / CDC 0568-73)).